A 295-amino-acid polypeptide reads, in one-letter code: MSFEAWIIATGVLVGVSCGLIGTFLVLRSMAMLADAISHTVLLGIVGAFLVTGSLDGIYMFIGAAATGLLTAFLVQLLHSKGVQSDAAIGVVFTSLFAIGVILLSVYGANVHLDIEHSLMGEIAFVPWNTVTVFGVDIGPKAFWMLASVLVLNVVLISVCYKEFKIASFDPQMALALGIPVLLIHYVQMGMLSLTTVASFDSVGAVLVVAMLIVPPAAAHLLTDRLLYMLILSALIGGLSAVMGYFFATWLNVSISGAMAAMTGVCYASAFLFSPANGVITKKLRTLNMQKERAG.

A run of 9 helical transmembrane segments spans residues Ile-7–Leu-27, Leu-42–Ile-62, Gly-63–Val-83, Ala-87–Tyr-107, Ile-138–Ser-158, Ala-174–Leu-194, Val-203–Thr-223, Leu-227–Phe-247, and Val-253–Phe-273.

It belongs to the ABC-3 integral membrane protein family. As to quaternary structure, the complex is probably composed of two ATP-binding proteins (MntB), two transmembrane proteins (MntC and MntD) and a solute-binding protein (MntA).

Its subcellular location is the cell membrane. Probably part of the ABC transporter complex MntABCD involved in manganese import. Probably responsible for the translocation of the substrate across the membrane. The protein is Manganese transport system membrane protein MntD of Bacillus subtilis (strain 168).